The following is a 469-amino-acid chain: MPVTGRGPCGTCAPALRSTSKDTILTHSDQPRPLQSRANGPLTGKVRVPGDKSISHRALILGALAVGETRISGLLEGEDVLNTAKSMQALGASVERTGDFAWKVQGVGVAGFAQPKAALDFGNSGTGCRLVMGAVAGCPISAVFDGDASLRSRPMRRILDPLEKMGARVVSGGEGGRLPLTLQGARDPLPITYKTPVASAQIKSAVLLAGLAAPGTTTVIESEASRDHTELMLKHFGADITSTKEGQHGRRITLVGQPELHGANVVVPADPSSAAFPVVAALIAEGSDVVLSDVMTNPLRTGLFTTLREMGASIEESEVRGDAGEPMAQLRVRASKLRGVEVPPERAPSMIDEYLVLAVAASFAEGTTIMRGLQELRVKESDRLEATAEMLRVNGVKVEVSGDDLVVQGRGHVPGGGTVATHMDHRIAMSALVMGCASDQPVTVDDTAFIATSFPDFIPMMRSLGAEFS.

The disordered stretch occupies residues 21–45 (KDTILTHSDQPRPLQSRANGPLTGK). 3-phosphoshikimate contacts are provided by K52, S53, and R57. K52 lines the phosphoenolpyruvate pocket. G125 and R153 together coordinate phosphoenolpyruvate. Residues S199, Q201, D352, and K379 each contribute to the 3-phosphoshikimate site. Q201 lines the phosphoenolpyruvate pocket. D352 acts as the Proton acceptor in catalysis. Phosphoenolpyruvate contacts are provided by R383 and R426.

The protein belongs to the EPSP synthase family. As to quaternary structure, monomer.

The protein localises to the cytoplasm. The catalysed reaction is 3-phosphoshikimate + phosphoenolpyruvate = 5-O-(1-carboxyvinyl)-3-phosphoshikimate + phosphate. The protein operates within metabolic intermediate biosynthesis; chorismate biosynthesis; chorismate from D-erythrose 4-phosphate and phosphoenolpyruvate: step 6/7. In terms of biological role, catalyzes the transfer of the enolpyruvyl moiety of phosphoenolpyruvate (PEP) to the 5-hydroxyl of shikimate-3-phosphate (S3P) to produce enolpyruvyl shikimate-3-phosphate and inorganic phosphate. The chain is 3-phosphoshikimate 1-carboxyvinyltransferase from Bradyrhizobium diazoefficiens (strain JCM 10833 / BCRC 13528 / IAM 13628 / NBRC 14792 / USDA 110).